The sequence spans 412 residues: Putative competence-damage inducible protein (412 aa).

The protein belongs to the CinA family.

The protein is Putative competence-damage inducible protein of Clostridium perfringens (strain SM101 / Type A).